A 161-amino-acid chain; its full sequence is Allophycocyanin beta chain (161 aa).

Position 71 is an N4-methylasparagine (Asn-71). A (2R,3E)-phycocyanobilin-binding site is contributed by Cys-81.

Belongs to the phycobiliprotein family. In terms of assembly, heterodimer of an alpha and a beta chain. In terms of processing, contains one covalently linked phycocyanobilin chromophore.

It localises to the cellular thylakoid membrane. Its function is as follows. Light-harvesting photosynthetic bile pigment-protein from the phycobiliprotein complex. Allophycocyanin has a maximum absorption at approximately 650 nanometers. The sequence is that of Allophycocyanin beta chain (apcB) from Mastigocladus laminosus (Fischerella sp.).